A 395-amino-acid chain; its full sequence is Tryptophan synthase beta chain (395 aa).

An N6-(pyridoxal phosphate)lysine modification is found at Lys-86.

The protein belongs to the TrpB family. As to quaternary structure, tetramer of two alpha and two beta chains. Pyridoxal 5'-phosphate serves as cofactor.

The enzyme catalyses (1S,2R)-1-C-(indol-3-yl)glycerol 3-phosphate + L-serine = D-glyceraldehyde 3-phosphate + L-tryptophan + H2O. The protein operates within amino-acid biosynthesis; L-tryptophan biosynthesis; L-tryptophan from chorismate: step 5/5. The beta subunit is responsible for the synthesis of L-tryptophan from indole and L-serine. The polypeptide is Tryptophan synthase beta chain (Psychromonas ingrahamii (strain DSM 17664 / CCUG 51855 / 37)).